Here is a 328-residue protein sequence, read N- to C-terminus: MARTVVLITGCSSGIGLHLAVRLASDPSQSFKVYATLRDLKTQGRLWEAARALACPPGSLETLQLDVRDSKSVAAARERVTEGRVDVLVCNAGLGLLGPLEALGEDAVASVLDVNVVGTVRMLQAFLPDMKRRGSGRVLVTGSVGGLMGLPFNDVYCASKFALEGLCESLAVLLLPFGVHLSLIECGPVHTAFMEKVLGSPEEVLDRTDIHTFHRFYQYLAHSKQVFREAAQNPEEVAEVFLTALRAPKPTLRYFTTERFLPLLRMRLDDPSGSNYVTAMHREVFGDVPAKAEAGAEAGGGAGPGAEDEAGRGAVGDPELGDPPAAPQ.

NADP(+) contacts are provided by residues 10–38 and aspartate 66; that span reads GCSS…ATLR. Serine 135 carries the post-translational modification Phosphoserine; by PKA. Serine 143 contacts substrate. Residue tyrosine 156 is the Proton acceptor of the active site. Lysine 160 contributes to the NADP(+) binding site. The tract at residues 291–328 is disordered; it reads KAEAGAEAGGGAGPGAEDEAGRGAVGDPELGDPPAAPQ.

It belongs to the short-chain dehydrogenases/reductases (SDR) family. Homodimer. Exists predominantly as a homodimer but also exits as monomer.

Its subcellular location is the cytoplasm. It carries out the reaction 17beta-estradiol + NAD(+) = estrone + NADH + H(+). The enzyme catalyses 17beta-estradiol + NADP(+) = estrone + NADPH + H(+). The catalysed reaction is testosterone + NADP(+) = androst-4-ene-3,17-dione + NADPH + H(+). The protein operates within steroid biosynthesis; estrogen biosynthesis. Its function is as follows. Favors the reduction of estrogens and androgens. Converts estrone (E1) to a more potent estrogen, 17beta-estradiol (E2). Also has 20-alpha-HSD activity. Uses preferentially NADH. In Homo sapiens (Human), this protein is 17-beta-hydroxysteroid dehydrogenase type 1.